A 311-amino-acid polypeptide reads, in one-letter code: Porphobilinogen deaminase (311 aa).

C240 is modified (S-(dipyrrolylmethanemethyl)cysteine).

Belongs to the HMBS family. As to quaternary structure, monomer. Dipyrromethane is required as a cofactor.

The catalysed reaction is 4 porphobilinogen + H2O = hydroxymethylbilane + 4 NH4(+). Its pathway is porphyrin-containing compound metabolism; protoporphyrin-IX biosynthesis; coproporphyrinogen-III from 5-aminolevulinate: step 2/4. Its function is as follows. Tetrapolymerization of the monopyrrole PBG into the hydroxymethylbilane pre-uroporphyrinogen in several discrete steps. The polypeptide is Porphobilinogen deaminase (Natranaerobius thermophilus (strain ATCC BAA-1301 / DSM 18059 / JW/NM-WN-LF)).